A 364-amino-acid polypeptide reads, in one-letter code: C3a anaphylatoxin chemotactic receptor (364 aa).

Residues 1–50 are Extracellular-facing; sequence MGDNMDFSEHYGNFSENYVTESYGEFDLYYDPLNETSLSEQGHRSIWVLS. N-linked (GlcNAc...) asparagine glycosylation is found at N13 and N34. The chain crosses the membrane as a helical span at residues 51 to 71; sequence IVLCSIACVLGITGNAFVIWI. Over 72–82 the chain is Cytoplasmic; sequence AGVKMKRTVNT. A helical transmembrane segment spans residues 83 to 103; it reads IWFVNLAAADLLCCVSIPFSI. Residues 104-120 lie on the Extracellular side of the membrane; that stretch reads ADIILNSHWPYGEAMCK. Cysteines 119 and 198 form a disulfide. A helical transmembrane segment spans residues 121–141; sequence ILPSMVVLNMFASVFTLVLIS. Residues 142-159 are Cytoplasmic-facing; the sequence is LDRFALVILPVWAQNHRS. A helical transmembrane segment spans residues 160–180; sequence ITLAWLLCGLVWVLGLLLSLP. The Extracellular segment spans residues 181-220; that stretch reads SMIYREIVVHDDMNITLCIYNHLQDKTEGNQSAIKAIHVT. Residues 221–241 form a helical membrane-spanning segment; the sequence is RLILGFLIPLLVIAVCYLLIG. Over 242-256 the chain is Cytoplasmic; that stretch reads RRVSSGRFKSQRAFQ. A helical membrane pass occupies residues 257–277; the sequence is IILVVVTTFFVCWLPYHVIGL. The Extracellular segment spans residues 278-295; that stretch reads VIEYGKEASQVMARALDP. Residues 296–316 form a helical membrane-spanning segment; it reads LAISLAYVNSCLNPVLYVFMG. The Cytoplasmic portion of the chain corresponds to 317–364; that stretch reads QDFKERVRVSLRKIFEKVFSEDVTLRSSVYSKGQSQLSRATNSSEAQV.

Belongs to the G-protein coupled receptor 1 family.

The protein localises to the cell membrane. In terms of biological role, receptor for the chemotactic and inflammatory peptide anaphylatoxin C3a. This receptor stimulates chemotaxis, granule enzyme release and superoxide anion production. In Oncorhynchus mykiss (Rainbow trout), this protein is C3a anaphylatoxin chemotactic receptor (c3ar1).